The following is a 222-amino-acid chain: Small ribosomal subunit protein uS3 (222 aa).

The region spanning 39–109 (IRNFVKKKVY…NILINIVEVK (71 aa)) is the KH type-2 domain.

Belongs to the universal ribosomal protein uS3 family. In terms of assembly, part of the 30S ribosomal subunit. Forms a tight complex with proteins S10 and S14.

In terms of biological role, binds the lower part of the 30S subunit head. Binds mRNA in the 70S ribosome, positioning it for translation. In Clostridium tetani (strain Massachusetts / E88), this protein is Small ribosomal subunit protein uS3.